A 253-amino-acid polypeptide reads, in one-letter code: MAMQSETPGNPASTVDPAEIAKFSKLSAEWWDPTGRMAPLHKINPHRVAFIRDAACRKFDRNPKSLNSLAGLRMIDIGCGAGLLCEPFTRLGAQVIGIDPSATNIAAAKVHAEKSRLLIDYRNTTAEAMDPRERFDIVLAMEVIEHVTDVGAFLGRCAAMMKPTGLMVVATLNRNWKSFALAIVGAEYVMRWLPRGTHQWDKFVTPEELTRHLQNSRLAVTEQAGLVYNPLADKWNLSADMDVNYMMVAESAG.

Positions 47, 78, 99, and 141 each coordinate S-adenosyl-L-methionine.

The protein belongs to the methyltransferase superfamily. UbiG/COQ3 family.

It catalyses the reaction a 3-demethylubiquinol + S-adenosyl-L-methionine = a ubiquinol + S-adenosyl-L-homocysteine + H(+). It carries out the reaction a 3-(all-trans-polyprenyl)benzene-1,2-diol + S-adenosyl-L-methionine = a 2-methoxy-6-(all-trans-polyprenyl)phenol + S-adenosyl-L-homocysteine + H(+). It functions in the pathway cofactor biosynthesis; ubiquinone biosynthesis. O-methyltransferase that catalyzes the 2 O-methylation steps in the ubiquinone biosynthetic pathway. The sequence is that of Ubiquinone biosynthesis O-methyltransferase from Rhodopseudomonas palustris (strain BisA53).